A 569-amino-acid chain; its full sequence is Methionine--tRNA ligase (569 aa).

The short motif at 11–21 (PYINGIKHLGN) is the 'HIGH' region element. Zn(2+) contacts are provided by Cys143, Cys146, Cys156, and Cys159. The 'KMSKS' region signature appears at 342–346 (KFSTS). Thr345 contacts ATP.

The protein belongs to the class-I aminoacyl-tRNA synthetase family. MetG type 1 subfamily. Monomer. Zn(2+) is required as a cofactor.

It localises to the cytoplasm. The enzyme catalyses tRNA(Met) + L-methionine + ATP = L-methionyl-tRNA(Met) + AMP + diphosphate. In terms of biological role, is required not only for elongation of protein synthesis but also for the initiation of all mRNA translation through initiator tRNA(fMet) aminoacylation. The sequence is that of Methionine--tRNA ligase from Caulobacter vibrioides (strain ATCC 19089 / CIP 103742 / CB 15) (Caulobacter crescentus).